Consider the following 622-residue polypeptide: Chaperone protein HscA homolog (622 aa).

The protein belongs to the heat shock protein 70 family.

Chaperone involved in the maturation of iron-sulfur cluster-containing proteins. Has a low intrinsic ATPase activity which is markedly stimulated by HscB. The polypeptide is Chaperone protein HscA homolog (Verminephrobacter eiseniae (strain EF01-2)).